The primary structure comprises 749 residues: Meiotically up-regulated gene 122 protein (749 aa).

The Cytoplasmic portion of the chain corresponds to 1–20 (MYRKWDLCITRHLLPYIEHS). A helical; Signal-anchor for type II membrane protein membrane pass occupies residues 21–41 (VIPIIALLVLSLIFYILYICF). The Lumenal portion of the chain corresponds to 42–749 (GTTSYILSGI…LLSNALRSII (708 aa)). The PXA domain maps to 88–261 (PPELEAPLQL…CIILYFSSSE (174 aa)). Positions 311–422 (LHYQFLKEAS…KFFAKSMRSH (112 aa)) constitute a PX domain. Disordered stretches follow at residues 439 to 489 (QSSS…LSQQ) and 504 to 546 (GSCT…PPKP). Composition is skewed to polar residues over residues 440–461 (SSSV…NKTS) and 475–489 (LSHQ…LSQQ).

This sequence belongs to the sorting nexin family.

The protein resides in the endoplasmic reticulum membrane. In terms of biological role, has a role in meiosis. This Schizosaccharomyces pombe (strain 972 / ATCC 24843) (Fission yeast) protein is Meiotically up-regulated gene 122 protein (mug122).